Consider the following 1004-residue polypeptide: Polyhomeotic-like protein 1 (1004 aa).

The span at 1 to 22 shows a compositional bias: low complexity; it reads METESEQNSNSTNGSSSSGGSS. 6 disordered regions span residues 1–24, 212–241, 261–355, 432–512, 556–589, and 636–672; these read METE…SSRP, NQQA…SSLS, SLNL…NLTR, QQQQ…QLGA, RGMP…PPTL, and TLAV…SPKV. Residues 212 to 228 show a composition bias toward polar residues; sequence NQQASAQGPQMQGSTQK. Residues 279 to 303 show a composition bias toward gly residues; sequence MGPGGGGQAHGGLGQLPSSGMGGGS. Polar residues-rich tracts occupy residues 319 to 329 and 344 to 355; these read QTVTVSQGSQT and SGQQNVGMNLTR. The span at 432–447 shows a compositional bias: low complexity; the sequence is QQQQQQQQPQATTLTA. Over residues 448–458 the composition is skewed to pro residues; the sequence is PQPPQVPPTQQ. Residues 459 to 482 are compositionally biased toward low complexity; sequence VPPSQSQQQAQTLVVQPMLQSSPL. Residues 483 to 495 are compositionally biased toward pro residues; sequence SLPPDAAPKPPIP. Low complexity predominate over residues 566 to 583; sequence QAHLASSPPSSQAPGALQ. A Phosphoserine modification is found at Ser-645. Lys-763 participates in a covalent cross-link: Glycyl lysine isopeptide (Lys-Gly) (interchain with G-Cter in SUMO2). The FCS-type zinc-finger motif lies at 791-825; it reads LDKKANLLKCEYCGKYAPAEQFRGSKRFCSMTCAK. Residues Cys-800, Cys-803, Cys-819, and Cys-823 each contribute to the Zn(2+) site. Positions 848 to 928 are disordered; sequence ANYARVRRRG…APPTPELHGI (81 aa). A Phosphoserine modification is found at Ser-898. Thr-922 bears the Phosphothreonine mark. The SAM domain occupies 940-1004; it reads WSVEEVYEFI…CAKINVLKET (65 aa).

As to quaternary structure, homodimer. Component of a PRC1-like complex. Interacts with RNF2 and CBX7. Interacts with PHC2, PHC2 and BMI1.

The protein resides in the nucleus. In terms of biological role, component of a Polycomb group (PcG) multiprotein PRC1-like complex, a complex class required to maintain the transcriptionally repressive state of many genes, including Hox genes, throughout development. PcG PRC1 complex acts via chromatin remodeling and modification of histones; it mediates monoubiquitination of histone H2A 'Lys-119', rendering chromatin heritably changed in its expressibility. Required for proper control of cellular levels of GMNN expression. This Homo sapiens (Human) protein is Polyhomeotic-like protein 1 (PHC1).